The primary structure comprises 90 residues: Probable Fe(2+)-trafficking protein (90 aa).

The protein belongs to the Fe(2+)-trafficking protein family.

Could be a mediator in iron transactions between iron acquisition and iron-requiring processes, such as synthesis and/or repair of Fe-S clusters in biosynthetic enzymes. This chain is Probable Fe(2+)-trafficking protein, found in Actinobacillus succinogenes (strain ATCC 55618 / DSM 22257 / CCUG 43843 / 130Z).